The sequence spans 313 residues: Ribosomal protein L11 methyltransferase (313 aa).

Threonine 161, glycine 182, aspartate 204, and asparagine 246 together coordinate S-adenosyl-L-methionine.

It belongs to the methyltransferase superfamily. PrmA family.

The protein localises to the cytoplasm. The catalysed reaction is L-lysyl-[protein] + 3 S-adenosyl-L-methionine = N(6),N(6),N(6)-trimethyl-L-lysyl-[protein] + 3 S-adenosyl-L-homocysteine + 3 H(+). In terms of biological role, methylates ribosomal protein L11. The sequence is that of Ribosomal protein L11 methyltransferase from Acetivibrio thermocellus (strain ATCC 27405 / DSM 1237 / JCM 9322 / NBRC 103400 / NCIMB 10682 / NRRL B-4536 / VPI 7372) (Clostridium thermocellum).